Reading from the N-terminus, the 256-residue chain is 1-(5-phosphoribosyl)-5-[(5-phosphoribosylamino)methylideneamino] imidazole-4-carboxamide isomerase (256 aa).

Asp-8 functions as the Proton acceptor in the catalytic mechanism. Asp-129 functions as the Proton donor in the catalytic mechanism.

The protein belongs to the HisA/HisF family.

Its subcellular location is the cytoplasm. It catalyses the reaction 1-(5-phospho-beta-D-ribosyl)-5-[(5-phospho-beta-D-ribosylamino)methylideneamino]imidazole-4-carboxamide = 5-[(5-phospho-1-deoxy-D-ribulos-1-ylimino)methylamino]-1-(5-phospho-beta-D-ribosyl)imidazole-4-carboxamide. It functions in the pathway amino-acid biosynthesis; L-histidine biosynthesis; L-histidine from 5-phospho-alpha-D-ribose 1-diphosphate: step 4/9. The protein is 1-(5-phosphoribosyl)-5-[(5-phosphoribosylamino)methylideneamino] imidazole-4-carboxamide isomerase of Prochlorococcus marinus (strain NATL2A).